A 129-amino-acid polypeptide reads, in one-letter code: Thioredoxin-like 3-3 (129 aa).

Residues M1–G10 are compositionally biased toward basic and acidic residues. The tract at residues M1–G30 is disordered. Residues K7–S129 form the Thioredoxin domain. The segment covering P19 to G30 has biased composition (polar residues). Catalysis depends on nucleophile residues C58 and C61. The cysteines at positions 58 and 61 are disulfide-linked.

This sequence belongs to the thioredoxin family.

Its function is as follows. Probable thiol-disulfide oxidoreductase that may participate in various redox reactions. The protein is Thioredoxin-like 3-3 of Oryza sativa subsp. japonica (Rice).